The primary structure comprises 269 residues: Ribosomal RNA small subunit methyltransferase J (269 aa).

Residues Glu125–Arg126 and Asp179 each bind S-adenosyl-L-methionine.

It belongs to the methyltransferase superfamily. RsmJ family.

The protein localises to the cytoplasm. The enzyme catalyses guanosine(1516) in 16S rRNA + S-adenosyl-L-methionine = N(2)-methylguanosine(1516) in 16S rRNA + S-adenosyl-L-homocysteine + H(+). Functionally, specifically methylates the guanosine in position 1516 of 16S rRNA. This is Ribosomal RNA small subunit methyltransferase J from Pseudomonas syringae pv. syringae (strain B728a).